The following is a 652-amino-acid chain: Probable export ATP-binding/permease protein PFL_2149 (652 aa).

Residues Leu6–Arg244 form the ABC transporter domain. Gly42–Ser49 contributes to the ATP binding site. Transmembrane regions (helical) follow at residues Leu251–Ser271, Leu277–Gly297, Leu525–Met545, Ile586–Ile606, and Met615–Val635.

It belongs to the ABC transporter superfamily. Macrolide exporter (TC 3.A.1.122) family. As to quaternary structure, probably part of a tripartite efflux system, which is composed of an inner membrane transporter, a periplasmic membrane fusion protein, and an outer membrane component.

It is found in the cell inner membrane. Its function is as follows. Probably part of a tripartite efflux system. The protein is Probable export ATP-binding/permease protein PFL_2149 of Pseudomonas fluorescens (strain ATCC BAA-477 / NRRL B-23932 / Pf-5).